The chain runs to 312 residues: Pectin lyase (312 aa).

Arginine 201 is a catalytic residue. Residues 254 to 274 (GSGTFTDTNSVPPITNQKSPK) form a disordered region. Residues 256-274 (GTFTDTNSVPPITNQKSPK) show a composition bias toward polar residues.

Belongs to the polysaccharide lyase 1 family.

It carries out the reaction Eliminative cleavage of (1-&gt;4)-alpha-D-galacturonan methyl ester to give oligosaccharides with 4-deoxy-6-O-methyl-alpha-D-galact-4-enuronosyl groups at their non-reducing ends.. The polypeptide is Pectin lyase (pnl) (Pseudomonas marginalis (Pseudomonas panacis)).